A 65-amino-acid polypeptide reads, in one-letter code: Sarcoplasmic/endoplasmic reticulum calcium ATPase regulator ARLN (65 aa).

M1 is subject to N-acetylmethionine. The segment at 1–36 (MEVSQAASGTDGVRERRGSFEAGRRNQDEAPQSGMN) is disordered. The segment covering 12–28 (GVRERRGSFEAGRRNQD) has biased composition (basic and acidic residues). Residue S19 is modified to Phosphoserine. Residues 44–64 (WLDLWLFILFDLALFVFVYLL) traverse the membrane as a helical segment.

In terms of assembly, homooligomer. Can also form heterooligomers with other sarcoplasmic/endoplasmic reticulum calcium ATPase (SERCA) regulators ERLN, PLN, SLN and STRIT1/DWORF. Monomer. Interacts as a monomer with ATP2A2/SERCA2; the interaction results in inhibition of ATP2A2 Ca(2+) affinity. In terms of tissue distribution, in the embryo, expressed in heart, epidermal epithelium, salivary gland, brown fat, intestinal epithelium and bladder urothelium.

The protein resides in the endoplasmic reticulum membrane. Functionally, inhibits the activity of the calcium ATPases ATP2A2/SERCA2 and ATP2A3/SERCA3 by decreasing their apparent affinity for Ca(2+). The sequence is that of Sarcoplasmic/endoplasmic reticulum calcium ATPase regulator ARLN (Arln) from Mus musculus (Mouse).